A 338-amino-acid chain; its full sequence is MKLKDFDYYLPEELIAQTPLEKRDESRLLVLKRQTGEITHDVFKNLKKYLVPGDLLVVNKTRVIPARLFGVREQGGEVEILLVKRMNFREWEVLVKPGRRARVGTRLIFAPGVLEGEIVAQTEVGRIIKFSFQGVFEEILNQLGQTPLPPYIKEKLKDPERYQTIYAKEPGSAAAPTAGLHFTRELISELKDYGVEFAEVLLHVGLGTFKPVKTENILEHKMHEEYYEIENEAAEKVNKAKREGRRVIAVGTTVVRVLESVADKGQVAPAKGYTDLFIYPGFNFQIIDGLITNFHLPKSTLLMLVSAFAGREKVLNAYEIAVRLRYRFFSFGDAMLII.

This sequence belongs to the QueA family. Monomer.

The protein localises to the cytoplasm. The catalysed reaction is 7-aminomethyl-7-carbaguanosine(34) in tRNA + S-adenosyl-L-methionine = epoxyqueuosine(34) in tRNA + adenine + L-methionine + 2 H(+). It participates in tRNA modification; tRNA-queuosine biosynthesis. In terms of biological role, transfers and isomerizes the ribose moiety from AdoMet to the 7-aminomethyl group of 7-deazaguanine (preQ1-tRNA) to give epoxyqueuosine (oQ-tRNA). The protein is S-adenosylmethionine:tRNA ribosyltransferase-isomerase of Carboxydothermus hydrogenoformans (strain ATCC BAA-161 / DSM 6008 / Z-2901).